A 470-amino-acid chain; its full sequence is Diaminobutyrate--2-oxoglutarate aminotransferase (470 aa).

The residue at position 304 (K304) is an N6-(pyridoxal phosphate)lysine.

It belongs to the class-III pyridoxal-phosphate-dependent aminotransferase family. Requires pyridoxal 5'-phosphate as cofactor.

The catalysed reaction is L-2,4-diaminobutanoate + 2-oxoglutarate = L-aspartate 4-semialdehyde + L-glutamate. The protein operates within siderophore biosynthesis; rhizobactin biosynthesis. The protein is Diaminobutyrate--2-oxoglutarate aminotransferase (rhbA) of Rhizobium meliloti (strain 1021) (Ensifer meliloti).